Here is a 489-residue protein sequence, read N- to C-terminus: Ketol-acid reductoisomerase (NADP(+)) (489 aa).

In terms of domain architecture, KARI N-terminal Rossmann spans 16–207 (LRKCKLVEKN…GSHRAGVLHS (192 aa)). Residues 44 to 47 (CGSQ), arginine 67, serine 77, and 107 to 109 (DKQ) contribute to the NADP(+) site. Histidine 131 is an active-site residue. Residue glycine 157 coordinates NADP(+). 2 consecutive KARI C-terminal knotted domains span residues 208–343 (SFIA…KCKI) and 344–483 (CHKE…MVDM). Aspartate 216, glutamate 220, glutamate 388, and glutamate 392 together coordinate Mg(2+). Residue serine 413 participates in substrate binding.

It belongs to the ketol-acid reductoisomerase family. The cofactor is Mg(2+).

The catalysed reaction is (2R)-2,3-dihydroxy-3-methylbutanoate + NADP(+) = (2S)-2-acetolactate + NADPH + H(+). It carries out the reaction (2R,3R)-2,3-dihydroxy-3-methylpentanoate + NADP(+) = (S)-2-ethyl-2-hydroxy-3-oxobutanoate + NADPH + H(+). Its pathway is amino-acid biosynthesis; L-isoleucine biosynthesis; L-isoleucine from 2-oxobutanoate: step 2/4. The protein operates within amino-acid biosynthesis; L-valine biosynthesis; L-valine from pyruvate: step 2/4. Involved in the biosynthesis of branched-chain amino acids (BCAA). Catalyzes an alkyl-migration followed by a ketol-acid reduction of (S)-2-acetolactate (S2AL) to yield (R)-2,3-dihydroxy-isovalerate. In the isomerase reaction, S2AL is rearranged via a Mg-dependent methyl migration to produce 3-hydroxy-3-methyl-2-ketobutyrate (HMKB). In the reductase reaction, this 2-ketoacid undergoes a metal-dependent reduction by NADPH to yield (R)-2,3-dihydroxy-isovalerate. This is Ketol-acid reductoisomerase (NADP(+)) from Buchnera aphidicola subsp. Schlechtendalia chinensis.